Consider the following 102-residue polypeptide: NADH-quinone oxidoreductase subunit K (102 aa).

The next 3 helical transmembrane spans lie at 5–25, 31–51, and 66–86; these read ITHY…GIFL, IIIL…FVAF, and FVLT…VVFF.

Belongs to the complex I subunit 4L family. NDH-1 is composed of 14 different subunits. Subunits NuoA, H, J, K, L, M, N constitute the membrane sector of the complex.

It localises to the cell inner membrane. It carries out the reaction a quinone + NADH + 5 H(+)(in) = a quinol + NAD(+) + 4 H(+)(out). Its function is as follows. NDH-1 shuttles electrons from NADH, via FMN and iron-sulfur (Fe-S) centers, to quinones in the respiratory chain. The immediate electron acceptor for the enzyme in this species is believed to be ubiquinone. Couples the redox reaction to proton translocation (for every two electrons transferred, four hydrogen ions are translocated across the cytoplasmic membrane), and thus conserves the redox energy in a proton gradient. The polypeptide is NADH-quinone oxidoreductase subunit K (Bartonella tribocorum (strain CIP 105476 / IBS 506)).